The sequence spans 113 residues: Large ribosomal subunit protein bL19 (113 aa).

The protein belongs to the bacterial ribosomal protein bL19 family.

In terms of biological role, this protein is located at the 30S-50S ribosomal subunit interface and may play a role in the structure and function of the aminoacyl-tRNA binding site. In Corynebacterium glutamicum (strain R), this protein is Large ribosomal subunit protein bL19.